Consider the following 121-residue polypeptide: Putative iron-sulfur cluster insertion protein ErpA (121 aa).

Iron-sulfur cluster is bound by residues Cys-49, Cys-113, and Cys-115.

It belongs to the HesB/IscA family. In terms of assembly, homodimer. It depends on iron-sulfur cluster as a cofactor.

Required for insertion of 4Fe-4S clusters. This Paracidovorax citrulli (strain AAC00-1) (Acidovorax citrulli) protein is Putative iron-sulfur cluster insertion protein ErpA.